We begin with the raw amino-acid sequence, 622 residues long: Low affinity potassium transport system protein Kup (622 aa).

The next 12 membrane-spanning stretches (helical) occupy residues 9–29 (LSAV…TSPL), 46–66 (PDVV…VVSV), 101–121 (ILVV…VITP), 137–157 (PALD…LFVI), 165–185 (VGKL…LLGL), 213–233 (VSFF…ALYA), 247–267 (WFTV…ALLL), 276–296 (PFFL…ATLA), 337–357 (IYIP…IIGF), 363–383 (LAAA…ILFC), 395–415 (FLVV…FSAN), and 416–436 (VLKL…MFII).

Belongs to the HAK/KUP transporter (TC 2.A.72) family.

It localises to the cell inner membrane. The enzyme catalyses K(+)(in) + H(+)(in) = K(+)(out) + H(+)(out). Functionally, responsible for the low-affinity transport of potassium into the cell. Likely operates as a K(+):H(+) symporter. This is Low affinity potassium transport system protein Kup from Yersinia pestis bv. Antiqua (strain Antiqua).